Here is a 1838-residue protein sequence, read N- to C-terminus: Nuclear pore complex protein NUP205 (1838 aa).

It belongs to the NUP186/NUP192/NUP205 family. As to quaternary structure, part of the nuclear pore complex (NPC). The NPC has an eight-fold symmetrical structure comprising a central transport channel and two rings, the cytoplasmic and nuclear rings, to which eight filaments are attached. The cytoplasmic filaments have loose ends, while the nuclear filaments are joined in a distal ring, forming a nuclear basket. NPCs are highly dynamic in configuration and composition, and can be devided in 3 subcomplexes, the NUP62 subcomplex, the NUP107-160 subcomplex and the NUP93 subcomplex, containing approximately 30 different nucleoporin proteins.

The protein resides in the nucleus envelope. It localises to the nucleus. The protein localises to the nuclear pore complex. This Arabidopsis thaliana (Mouse-ear cress) protein is Nuclear pore complex protein NUP205.